A 249-amino-acid chain; its full sequence is NAD(P)H-quinone oxidoreductase subunit K 2 (249 aa).

The [4Fe-4S] cluster site is built by C54, C55, C119, and C150.

This sequence belongs to the complex I 20 kDa subunit family. As to quaternary structure, NDH-1 can be composed of about 15 different subunits; different subcomplexes with different compositions have been identified which probably have different functions. Requires [4Fe-4S] cluster as cofactor.

It is found in the cell inner membrane. The enzyme catalyses a plastoquinone + NADH + (n+1) H(+)(in) = a plastoquinol + NAD(+) + n H(+)(out). It catalyses the reaction a plastoquinone + NADPH + (n+1) H(+)(in) = a plastoquinol + NADP(+) + n H(+)(out). Its function is as follows. NDH-1 shuttles electrons from an unknown electron donor, via FMN and iron-sulfur (Fe-S) centers, to quinones in the respiratory and/or the photosynthetic chain. The immediate electron acceptor for the enzyme in this species is believed to be plastoquinone. Couples the redox reaction to proton translocation, and thus conserves the redox energy in a proton gradient. Cyanobacterial NDH-1 also plays a role in inorganic carbon-concentration. The polypeptide is NAD(P)H-quinone oxidoreductase subunit K 2 (Gloeobacter violaceus (strain ATCC 29082 / PCC 7421)).